The following is a 399-amino-acid chain: CCA-adding enzyme (399 aa).

ATP-binding residues include G32 and R35. Positions 32 and 35 each coordinate CTP. Positions 45 and 47 each coordinate Mg(2+). ATP is bound by residues R116, D159, R162, R165, and R168. Residues R116, D159, R162, R165, and R168 each coordinate CTP.

Belongs to the tRNA nucleotidyltransferase/poly(A) polymerase family. Bacterial CCA-adding enzyme type 3 subfamily. In terms of assembly, homodimer. The cofactor is Mg(2+).

It catalyses the reaction a tRNA precursor + 2 CTP + ATP = a tRNA with a 3' CCA end + 3 diphosphate. The enzyme catalyses a tRNA with a 3' CCA end + 2 CTP + ATP = a tRNA with a 3' CCACCA end + 3 diphosphate. Catalyzes the addition and repair of the essential 3'-terminal CCA sequence in tRNAs without using a nucleic acid template. Adds these three nucleotides in the order of C, C, and A to the tRNA nucleotide-73, using CTP and ATP as substrates and producing inorganic pyrophosphate. tRNA 3'-terminal CCA addition is required both for tRNA processing and repair. Also involved in tRNA surveillance by mediating tandem CCA addition to generate a CCACCA at the 3' terminus of unstable tRNAs. While stable tRNAs receive only 3'-terminal CCA, unstable tRNAs are marked with CCACCA and rapidly degraded. This is CCA-adding enzyme from Streptococcus sanguinis (strain SK36).